We begin with the raw amino-acid sequence, 300 residues long: Free fatty acid receptor 1 (300 aa).

Residues 1-8 (MDLPPQLS) lie on the Extracellular side of the membrane. A helical membrane pass occupies residues 9-31 (FALYVAAFALGFPLNVLAIRGAR). Residues 32–41 (AHARRRLTPS) lie on the Cytoplasmic side of the membrane. A helical membrane pass occupies residues 42–64 (LVYALNLGCSDLLLTVSLPLKAV). Residues 65 to 79 (EALASGAWPLPASLC) lie on the Extracellular side of the membrane. A disulfide bridge connects residues C79 and C170. Residues 80–101 (PVFGVAHFAPLYAGGGFLAALS) form a helical membrane-spanning segment. Over 102 to 121 (AGRYLGAAFPLGYQAFRRPC) the chain is Cytoplasmic. The chain crosses the membrane as a helical span at residues 122–142 (YSWGVCAAIWALVLCHLGLVF). Topologically, residues 143–178 (VLEAPGGWLDHSNTSLGINTPVNGSPVCLEAWDPAS) are extracellular. N-linked (GlcNAc...) asparagine glycosylation occurs at N155. A helical membrane pass occupies residues 179–200 (AGPARFSLSLLLFFLPLAITAF). The Cytoplasmic portion of the chain corresponds to 201 to 223 (CYVGCLRALAHSGLTHRRKLRAA). A helical transmembrane segment spans residues 224–248 (WVAGGALLTLLLCVGPYNASNVASF). The Extracellular segment spans residues 249–256 (LNPNLGGS). The helical transmembrane segment at 257 to 279 (WRKLGLITGAWSVVLNPLVTGYL) threads the bilayer. At 280–300 (GRGPGLKTVCAARTQGSTSQK) the chain is on the cytoplasmic side.

This sequence belongs to the G-protein coupled receptor 1 family.

Its subcellular location is the cell membrane. G-protein coupled receptor for medium and long chain saturated and unsaturated fatty acids that plays an important role in glucose homeostasis. Fatty acid binding increases glucose-stimulated insulin secretion, and may also enhance the secretion of glucagon-like peptide 1 (GLP-1). May also play a role in bone homeostasis; receptor signaling activates pathways that inhibit osteoclast differentiation. Ligand binding leads to a conformation change that triggers signaling via G-proteins that activate phospholipase C, leading to an increase of the intracellular calcium concentration. Seems to act through a G(q) and G(i)-mediated pathway. Mediates the anti-inflammatory effects of omega-3 polyunsaturated fatty acids (PUFAs) via inhibition of NLRP3 inflammasome activation. This Macaca fascicularis (Crab-eating macaque) protein is Free fatty acid receptor 1 (FFAR1).